A 509-amino-acid polypeptide reads, in one-letter code: Dye-decolorizing peroxidase AauDyP1 (509 aa).

The first 22 residues, M1–A22, serve as a signal peptide directing secretion. A propeptide spanning residues R23 to A61 is cleaved from the precursor. Catalysis depends on D229, which acts as the Proton acceptor. N-linked (GlcNAc...) asparagine glycosylation is present at N343. Residue H365 coordinates heme. Residues N383, N410, and N476 are each glycosylated (N-linked (GlcNAc...) asparagine).

The protein belongs to the DyP-type peroxidase family. The cofactor is heme b.

It is found in the secreted. The enzyme catalyses Reactive Blue 5 + 2 H2O2 = 2,2'-disulfonyl azobenzene + 3-[(4-amino-6-chloro-1,3,5-triazin-2-yl)amino]benzenesulfonate + phthalate + 2 H2O + 2 H(+). It carries out the reaction 2 a phenolic donor + H2O2 = 2 a phenolic radical donor + 2 H2O. Inhibited by imidazole. Its function is as follows. Manganese-independent peroxidase that is able to convert a large number of compounds, but its physiological substrate is not known. In addition to classic peroxidase substrates (e.g. 2,6-dimethoxyphenol), oxidizes dyes such as Reactive Blue 5 and Reactive Black 5. The sequence is that of Dye-decolorizing peroxidase AauDyP1 from Auricularia auricula-judae (Judas ear fungus).